The sequence spans 252 residues: MHYQPKQDLLNDRIILVTGASDGIGREAAMTYARYGATVILLGRNEEKLRQVASHINEETGRQPQWFILDLLTCTSENCQQLAQRIAVNYPRLDGVLHNAGLLGDVCPMSEQNPQVWQDVMQVNVNATFMLTQALLPLLLKSDAGSLVFTSSSVGRQGRANWGAYAASKFATEGMMQVLADEYQQRLRVNCINPGGTRTAMRASAFPTEDPQKLKTPADIMPLYLWLMGDDSRRKTGMTFDAQPGRKPGISQ.

16 to 40 (LVTGASDGIGREAAMTYARYGATVI) is an NADP(+) binding site. Residue Ser152 coordinates substrate. The active-site Proton acceptor is the Tyr165.

The protein belongs to the short-chain dehydrogenases/reductases (SDR) family.

This is an uncharacterized protein from Escherichia coli (strain K12).